Here is a 150-residue protein sequence, read N- to C-terminus: Galectin-1 (150 aa).

One can recognise a Galectin domain in the interval 9 to 141; the sequence is NQIKLQDDFK…FSSPVTVDIH (133 aa). The a carbohydrate site is built by H51, R55, N64, and E75.

Homotetramer. Oligomerization is required for carbohydrate binding. In terms of tissue distribution, most abundant in fruiting bodies. Very low levels of expression in asexual vegetative mycelia.

The protein localises to the secreted. It localises to the extracellular space. The protein resides in the extracellular matrix. It is found in the cell wall. Its subcellular location is the endomembrane system. In terms of biological role, binds lactose. May play a role in fruiting body formation. This chain is Galectin-1 (Cgl1), found in Coprinopsis cinerea (strain Okayama-7 / 130 / ATCC MYA-4618 / FGSC 9003) (Inky cap fungus).